A 147-amino-acid chain; its full sequence is AP-2 complex subunit sigma (147 aa).

It belongs to the adaptor complexes small subunit family. In terms of assembly, adaptor protein complex 2 (AP-2) is a heterotetramer composed of two large adaptins (alpha-type subunit APL3 and beta-type subunit APL1), a medium chain (mu-type subunit APM4) and a small adaptin (sigma-type subunit APS2). Interacts with APL1.

The protein resides in the cell membrane. It is found in the membrane. The protein localises to the coated pit. Component of the adaptor complexes which link clathrin to receptors in coated vesicles. Clathrin-associated protein complexes are believed to interact with the cytoplasmic tails of membrane proteins, leading to their selection and concentration. The polypeptide is AP-2 complex subunit sigma (APS2) (Saccharomyces cerevisiae (strain ATCC 204508 / S288c) (Baker's yeast)).